A 72-amino-acid polypeptide reads, in one-letter code: Translation initiation factor IF-1 (72 aa).

The region spanning 1 to 72 (MSKTDVVEIE…TKGRIIWRDK (72 aa)) is the S1-like domain.

The protein belongs to the IF-1 family. As to quaternary structure, component of the 30S ribosomal translation pre-initiation complex which assembles on the 30S ribosome in the order IF-2 and IF-3, IF-1 and N-formylmethionyl-tRNA(fMet); mRNA recruitment can occur at any time during PIC assembly.

It is found in the cytoplasm. In terms of biological role, one of the essential components for the initiation of protein synthesis. Stabilizes the binding of IF-2 and IF-3 on the 30S subunit to which N-formylmethionyl-tRNA(fMet) subsequently binds. Helps modulate mRNA selection, yielding the 30S pre-initiation complex (PIC). Upon addition of the 50S ribosomal subunit IF-1, IF-2 and IF-3 are released leaving the mature 70S translation initiation complex. The polypeptide is Translation initiation factor IF-1 (Lachnoclostridium phytofermentans (strain ATCC 700394 / DSM 18823 / ISDg) (Clostridium phytofermentans)).